A 181-amino-acid chain; its full sequence is Protein GrpE (181 aa).

Residues 1–24 are compositionally biased toward acidic residues; the sequence is MSEENIGENEVETPETEPSAEAEV. The disordered stretch occupies residues 1–26; it reads MSEENIGENEVETPETEPSAEAEVES.

This sequence belongs to the GrpE family. Homodimer.

It is found in the cytoplasm. Its function is as follows. Participates actively in the response to hyperosmotic and heat shock by preventing the aggregation of stress-denatured proteins, in association with DnaK and GrpE. It is the nucleotide exchange factor for DnaK and may function as a thermosensor. Unfolded proteins bind initially to DnaJ; upon interaction with the DnaJ-bound protein, DnaK hydrolyzes its bound ATP, resulting in the formation of a stable complex. GrpE releases ADP from DnaK; ATP binding to DnaK triggers the release of the substrate protein, thus completing the reaction cycle. Several rounds of ATP-dependent interactions between DnaJ, DnaK and GrpE are required for fully efficient folding. This chain is Protein GrpE, found in Rhizorhabdus wittichii (strain DSM 6014 / CCUG 31198 / JCM 15750 / NBRC 105917 / EY 4224 / RW1) (Sphingomonas wittichii).